A 362-amino-acid chain; its full sequence is Sulfate/thiosulfate import ATP-binding protein CysA (362 aa).

The region spanning I3 to L237 is the ABC transporter domain. G35–T42 serves as a coordination point for ATP.

The protein belongs to the ABC transporter superfamily. Sulfate/tungstate importer (TC 3.A.1.6) family. The complex is composed of two ATP-binding proteins (CysA), two transmembrane proteins (CysT and CysW) and a solute-binding protein (CysP).

It is found in the cell inner membrane. It catalyses the reaction sulfate(out) + ATP + H2O = sulfate(in) + ADP + phosphate + H(+). The enzyme catalyses thiosulfate(out) + ATP + H2O = thiosulfate(in) + ADP + phosphate + H(+). Functionally, part of the ABC transporter complex CysAWTP involved in sulfate/thiosulfate import. Responsible for energy coupling to the transport system. The protein is Sulfate/thiosulfate import ATP-binding protein CysA of Photorhabdus laumondii subsp. laumondii (strain DSM 15139 / CIP 105565 / TT01) (Photorhabdus luminescens subsp. laumondii).